We begin with the raw amino-acid sequence, 227 residues long: Cytochrome c oxidase subunit 2 (227 aa).

At 1–14 the chain is on the mitochondrial intermembrane side; the sequence is MAYPFQLGLXDATS. Residues 15 to 45 traverse the membrane as a helical segment; the sequence is PIMEELLHFHDHTLMIVFLISSLVLYIITLM. Residues 46–59 are Mitochondrial matrix-facing; sequence LTTKLTHTSTMDAQ. A helical membrane pass occupies residues 60-87; the sequence is EVETVWTILPAIILILIALPSLRILYMM. Over 88 to 227 the chain is Mitochondrial intermembrane; sequence DEINNPSLTV…YFETWSAVMV (140 aa). Positions 161, 196, 198, 200, 204, and 207 each coordinate Cu cation. Glu198 contributes to the Mg(2+) binding site.

It belongs to the cytochrome c oxidase subunit 2 family. As to quaternary structure, component of the cytochrome c oxidase (complex IV, CIV), a multisubunit enzyme composed of 14 subunits. The complex is composed of a catalytic core of 3 subunits MT-CO1, MT-CO2 and MT-CO3, encoded in the mitochondrial DNA, and 11 supernumerary subunits COX4I, COX5A, COX5B, COX6A, COX6B, COX6C, COX7A, COX7B, COX7C, COX8 and NDUFA4, which are encoded in the nuclear genome. The complex exists as a monomer or a dimer and forms supercomplexes (SCs) in the inner mitochondrial membrane with NADH-ubiquinone oxidoreductase (complex I, CI) and ubiquinol-cytochrome c oxidoreductase (cytochrome b-c1 complex, complex III, CIII), resulting in different assemblies (supercomplex SCI(1)III(2)IV(1) and megacomplex MCI(2)III(2)IV(2)). Found in a complex with TMEM177, COA6, COX18, COX20, SCO1 and SCO2. Interacts with TMEM177 in a COX20-dependent manner. Interacts with COX20. Interacts with COX16. Cu cation is required as a cofactor.

Its subcellular location is the mitochondrion inner membrane. The enzyme catalyses 4 Fe(II)-[cytochrome c] + O2 + 8 H(+)(in) = 4 Fe(III)-[cytochrome c] + 2 H2O + 4 H(+)(out). Its function is as follows. Component of the cytochrome c oxidase, the last enzyme in the mitochondrial electron transport chain which drives oxidative phosphorylation. The respiratory chain contains 3 multisubunit complexes succinate dehydrogenase (complex II, CII), ubiquinol-cytochrome c oxidoreductase (cytochrome b-c1 complex, complex III, CIII) and cytochrome c oxidase (complex IV, CIV), that cooperate to transfer electrons derived from NADH and succinate to molecular oxygen, creating an electrochemical gradient over the inner membrane that drives transmembrane transport and the ATP synthase. Cytochrome c oxidase is the component of the respiratory chain that catalyzes the reduction of oxygen to water. Electrons originating from reduced cytochrome c in the intermembrane space (IMS) are transferred via the dinuclear copper A center (CU(A)) of subunit 2 and heme A of subunit 1 to the active site in subunit 1, a binuclear center (BNC) formed by heme A3 and copper B (CU(B)). The BNC reduces molecular oxygen to 2 water molecules using 4 electrons from cytochrome c in the IMS and 4 protons from the mitochondrial matrix. In Vulpes corsac (Corsac fox), this protein is Cytochrome c oxidase subunit 2 (MT-CO2).